Consider the following 376-residue polypeptide: Probable low-specificity L-threonine aldolase (376 aa).

A compositionally biased stretch (polar residues) spans 1-21 (MSGSVTSTTTETRLCPSNQGS). Positions 1–22 (MSGSVTSTTTETRLCPSNQGSA) are disordered. The residue at position 226 (Lys-226) is an N6-(pyridoxal phosphate)lysine.

This sequence belongs to the threonine aldolase family. As to quaternary structure, homotetramer. Pyridoxal 5'-phosphate serves as cofactor.

It carries out the reaction L-threonine = acetaldehyde + glycine. The catalysed reaction is L-allo-threonine = acetaldehyde + glycine. The protein operates within amino-acid degradation; L-threonine degradation via aldolase pathway; acetaldehyde and glycine from L-threonine: step 1/1. The sequence is that of Probable low-specificity L-threonine aldolase (gly1) from Schizosaccharomyces pombe (strain 972 / ATCC 24843) (Fission yeast).